We begin with the raw amino-acid sequence, 77 residues long: uncharacterized protein (77 aa).

Residues 13–67 form the HTH cro/C1-type domain; that stretch reads VLQYMVNNDYSLNQLALEIGVSPATLSRVLNGERRPGQLVIGKMLHYFNLKFEDL. Residues 24-43 constitute a DNA-binding region (H-T-H motif); the sequence is LNQLALEIGVSPATLSRVLN.

The protein localises to the cytoplasm. This is an uncharacterized protein from Bacillus subtilis (strain 168).